We begin with the raw amino-acid sequence, 490 residues long: Cobyric acid synthase (490 aa).

A GATase cobBQ-type domain is found at 252–428; that stretch reads ARRVAVVRLP…WHGAFEGDAL (177 aa). Cys-333 (nucleophile) is an active-site residue. The active site involves His-420.

The protein belongs to the CobB/CobQ family. CobQ subfamily.

It functions in the pathway cofactor biosynthesis; adenosylcobalamin biosynthesis. Its function is as follows. Catalyzes amidations at positions B, D, E, and G on adenosylcobyrinic A,C-diamide. NH(2) groups are provided by glutamine, and one molecule of ATP is hydrogenolyzed for each amidation. This chain is Cobyric acid synthase, found in Mycolicibacterium vanbaalenii (strain DSM 7251 / JCM 13017 / BCRC 16820 / KCTC 9966 / NRRL B-24157 / PYR-1) (Mycobacterium vanbaalenii).